The sequence spans 152 residues: Protein D1 (152 aa).

It belongs to the phosphatidylethanolamine-binding protein family.

The chain is Protein D1 (D1) from Onchocerca volvulus.